The sequence spans 610 residues: UvrABC system protein C (610 aa).

A GIY-YIG domain is found at Asn16–Val94. In terms of domain architecture, UVR spans Asn204 to Val239.

It belongs to the UvrC family. In terms of assembly, interacts with UvrB in an incision complex.

It localises to the cytoplasm. The UvrABC repair system catalyzes the recognition and processing of DNA lesions. UvrC both incises the 5' and 3' sides of the lesion. The N-terminal half is responsible for the 3' incision and the C-terminal half is responsible for the 5' incision. In Vibrio cholerae serotype O1 (strain ATCC 39315 / El Tor Inaba N16961), this protein is UvrABC system protein C.